The primary structure comprises 429 residues: Neuronal pentraxin-2 (429 aa).

The N-terminal stretch at 1–14 is a signal peptide; sequence MLALLTVGVALAVA. Asn-146 and Asn-187 each carry an N-linked (GlcNAc...) asparagine glycan. In terms of domain architecture, Pentraxin (PTX) spans 221 to 422; it reads DAFKVSLPLR…GASKWPVETC (202 aa). Cys-251 and Cys-311 are joined by a disulfide. 5 residues coordinate Ca(2+): Asn-275, Glu-353, Gln-354, Asp-355, and Gln-365. Asn-391 carries an N-linked (GlcNAc...) asparagine glycan.

In terms of assembly, homooligomer or heterooligomer (probably pentamer) with neuronal pentraxin receptor (NPTXR). Ca(2+) serves as cofactor.

Its subcellular location is the secreted. In terms of biological role, likely to play role in the modification of cellular properties that underlie long-term plasticity. Binds to agar matrix in a calcium-dependent manner. This is Neuronal pentraxin-2 (Nptx2) from Mus musculus (Mouse).